The chain runs to 488 residues: UDP-N-acetylmuramoyl-L-alanyl-D-glutamate--2,6-diaminopimelate ligase (488 aa).

Ser31 contacts UDP-N-acetyl-alpha-D-muramoyl-L-alanyl-D-glutamate. Residue 109-115 (GTNGKTS) coordinates ATP. Residues Asn150, 151 to 152 (TT), Ser178, and Arg186 contribute to the UDP-N-acetyl-alpha-D-muramoyl-L-alanyl-D-glutamate site. The residue at position 218 (Lys218) is an N6-carboxylysine. Meso-2,6-diaminopimelate contacts are provided by residues Arg384, 408–411 (DNPR), Gly458, and Glu462. Residues 408–411 (DNPR) carry the Meso-diaminopimelate recognition motif motif.

Belongs to the MurCDEF family. MurE subfamily. Requires Mg(2+) as cofactor. In terms of processing, carboxylation is probably crucial for Mg(2+) binding and, consequently, for the gamma-phosphate positioning of ATP.

It localises to the cytoplasm. The enzyme catalyses UDP-N-acetyl-alpha-D-muramoyl-L-alanyl-D-glutamate + meso-2,6-diaminopimelate + ATP = UDP-N-acetyl-alpha-D-muramoyl-L-alanyl-gamma-D-glutamyl-meso-2,6-diaminopimelate + ADP + phosphate + H(+). Its pathway is cell wall biogenesis; peptidoglycan biosynthesis. In terms of biological role, catalyzes the addition of meso-diaminopimelic acid to the nucleotide precursor UDP-N-acetylmuramoyl-L-alanyl-D-glutamate (UMAG) in the biosynthesis of bacterial cell-wall peptidoglycan. The polypeptide is UDP-N-acetylmuramoyl-L-alanyl-D-glutamate--2,6-diaminopimelate ligase (Bacillus licheniformis (strain ATCC 14580 / DSM 13 / JCM 2505 / CCUG 7422 / NBRC 12200 / NCIMB 9375 / NCTC 10341 / NRRL NRS-1264 / Gibson 46)).